Reading from the N-terminus, the 205-residue chain is LexA repressor (205 aa).

A DNA-binding region (H-T-H motif) is located at residues Arg28–Lys48. Catalysis depends on for autocatalytic cleavage activity residues Ser122 and Lys159.

Belongs to the peptidase S24 family. As to quaternary structure, homodimer.

It carries out the reaction Hydrolysis of Ala-|-Gly bond in repressor LexA.. Functionally, represses a number of genes involved in the response to DNA damage (SOS response), including recA and lexA. In the presence of single-stranded DNA, RecA interacts with LexA causing an autocatalytic cleavage which disrupts the DNA-binding part of LexA, leading to derepression of the SOS regulon and eventually DNA repair. This chain is LexA repressor, found in Shewanella loihica (strain ATCC BAA-1088 / PV-4).